The following is a 393-amino-acid chain: Protein TsgA homolog (393 aa).

The next 12 membrane-spanning stretches (helical) occupy residues 11-31, 51-71, 78-98, 101-121, 134-154, 162-182, 206-226, 245-265, 273-293, 297-317, 332-352, and 361-381; these read WISF…GMVM, FLNA…EIIP, FGFV…SLAL, AAMF…TFLI, LLFT…VAAY, WYWV…LTFG, IGVL…LGFI, TLVS…SFIL, ILTV…KAQP, AWFI…IITL, FVLT…GPIV, and LLTA…LGFV.

Belongs to the major facilitator superfamily. TsgA family.

Its subcellular location is the cell inner membrane. The polypeptide is Protein TsgA homolog (Citrobacter koseri (strain ATCC BAA-895 / CDC 4225-83 / SGSC4696)).